Here is a 292-residue protein sequence, read N- to C-terminus: Protein CHLOROPLAST ENHANCING STRESS TOLERANCE, chloroplastic (292 aa).

The span at Met1–Pro15 shows a compositional bias: pro residues. A chloroplast-targeting transit peptide spans Met1–Ala67. Disordered regions lie at residues Met1–Asp119 and Met206–Asp225. Low complexity-rich tracts occupy residues Ser49 to Arg58 and Ala94 to Ala107. The helical transmembrane segment at Ala267–Phe287 threads the bilayer.

The protein belongs to the Y3IP1/CEST family.

It is found in the plastid. Its subcellular location is the chloroplast thylakoid membrane. Functionally, involved in light-induced chloroplast development and growth. Involved in the plant response to abiotic and photooxidative stresses. May be involved in the suppression of photooxidative damage. This is Protein CHLOROPLAST ENHANCING STRESS TOLERANCE, chloroplastic from Oryza sativa subsp. indica (Rice).